Here is a 197-residue protein sequence, read N- to C-terminus: Holliday junction branch migration complex subunit RuvA (197 aa).

A domain I region spans residues 1–61 (MYEYFEGTIT…ENGMTLYGFK (61 aa)). The domain II stretch occupies residues 62 to 140 (SQQDKVLFNK…NYVAENLFTE (79 aa)). Residues 141–150 (DEPVESVFPA) form a flexible linker region. Positions 150-197 (ALEDALLALGALGYSQKEVDRIKPKLKKLPEMSADEYIKQGLGFLLKK) are domain III.

This sequence belongs to the RuvA family. In terms of assembly, homotetramer. Forms an RuvA(8)-RuvB(12)-Holliday junction (HJ) complex. HJ DNA is sandwiched between 2 RuvA tetramers; dsDNA enters through RuvA and exits via RuvB. An RuvB hexamer assembles on each DNA strand where it exits the tetramer. Each RuvB hexamer is contacted by two RuvA subunits (via domain III) on 2 adjacent RuvB subunits; this complex drives branch migration. In the full resolvosome a probable DNA-RuvA(4)-RuvB(12)-RuvC(2) complex forms which resolves the HJ.

Its subcellular location is the cytoplasm. Functionally, the RuvA-RuvB-RuvC complex processes Holliday junction (HJ) DNA during genetic recombination and DNA repair, while the RuvA-RuvB complex plays an important role in the rescue of blocked DNA replication forks via replication fork reversal (RFR). RuvA specifically binds to HJ cruciform DNA, conferring on it an open structure. The RuvB hexamer acts as an ATP-dependent pump, pulling dsDNA into and through the RuvAB complex. HJ branch migration allows RuvC to scan DNA until it finds its consensus sequence, where it cleaves and resolves the cruciform DNA. The polypeptide is Holliday junction branch migration complex subunit RuvA (Lactobacillus delbrueckii subsp. bulgaricus (strain ATCC BAA-365 / Lb-18)).